The primary structure comprises 91 residues: Protein sigN139 (91 aa).

Residues Asn23 and Asn34 are each glycosylated (N-linked (GlcNAc...) asparagine). Residues 46–68 (LLPVVAFISGTVTSITGLVAGAL) form a helical membrane-spanning segment.

The protein localises to the membrane. The chain is Protein sigN139 from Dictyostelium discoideum (Social amoeba).